The chain runs to 79 residues: Acyl carrier protein (79 aa).

The 76-residue stretch at 2–77 (ADHASKIKDI…DAVAYLEAKV (76 aa)) folds into the Carrier domain. S37 carries the O-(pantetheine 4'-phosphoryl)serine modification.

The protein belongs to the acyl carrier protein (ACP) family. Post-translationally, 4'-phosphopantetheine is transferred from CoA to a specific serine of apo-ACP by AcpS. This modification is essential for activity because fatty acids are bound in thioester linkage to the sulfhydryl of the prosthetic group.

The protein localises to the cytoplasm. It participates in lipid metabolism; fatty acid biosynthesis. Its function is as follows. Carrier of the growing fatty acid chain in fatty acid biosynthesis. This chain is Acyl carrier protein, found in Gemmatimonas aurantiaca (strain DSM 14586 / JCM 11422 / NBRC 100505 / T-27).